We begin with the raw amino-acid sequence, 78 residues long: DNA-directed RNA polymerase subunit Rpo5 (78 aa).

This sequence belongs to the archaeal Rpo5/eukaryotic RPB5 RNA polymerase subunit family. In terms of assembly, part of the RNA polymerase complex.

It localises to the cytoplasm. The enzyme catalyses RNA(n) + a ribonucleoside 5'-triphosphate = RNA(n+1) + diphosphate. Functionally, DNA-dependent RNA polymerase (RNAP) catalyzes the transcription of DNA into RNA using the four ribonucleoside triphosphates as substrates. The sequence is that of DNA-directed RNA polymerase subunit Rpo5 from Methanococcus maripaludis (strain C6 / ATCC BAA-1332).